The primary structure comprises 399 residues: Tyrosine--tRNA ligase 2 (399 aa).

The 'HIGH' region signature appears at 42-51 (PTAPDLHLGH). Positions 226–230 (KMSKS) match the 'KMSKS' region motif. An ATP-binding site is contributed by lysine 229. Residues 336 to 396 (MPVASVLNKA…GKKAFARITL (61 aa)) form the S4 RNA-binding domain.

This sequence belongs to the class-I aminoacyl-tRNA synthetase family. TyrS type 2 subfamily. As to quaternary structure, homodimer.

It is found in the cytoplasm. It carries out the reaction tRNA(Tyr) + L-tyrosine + ATP = L-tyrosyl-tRNA(Tyr) + AMP + diphosphate + H(+). In terms of biological role, catalyzes the attachment of tyrosine to tRNA(Tyr) in a two-step reaction: tyrosine is first activated by ATP to form Tyr-AMP and then transferred to the acceptor end of tRNA(Tyr). This Pseudomonas aeruginosa (strain ATCC 15692 / DSM 22644 / CIP 104116 / JCM 14847 / LMG 12228 / 1C / PRS 101 / PAO1) protein is Tyrosine--tRNA ligase 2.